We begin with the raw amino-acid sequence, 150 residues long: Myosin, essential light chain (150 aa).

EF-hand domains are found at residues Ala3–Ser38 and Glu75–Tyr110. Asp16, Asp18, Asp20, Lys22, and Asp27 together coordinate Ca(2+).

In terms of assembly, myosin is a hexamer of 2 heavy chains and 4 light chains (two regulatory light chains and two essential light chains).

The sequence is that of Myosin, essential light chain (mlcE) from Dictyostelium discoideum (Social amoeba).